We begin with the raw amino-acid sequence, 130 residues long: Small ribosomal subunit protein uS8 (130 aa).

The protein belongs to the universal ribosomal protein uS8 family. Part of the 30S ribosomal subunit.

One of the primary rRNA binding proteins, it binds directly to 16S rRNA central domain where it helps coordinate assembly of the platform of the 30S subunit. The polypeptide is Small ribosomal subunit protein uS8 (Thermococcus gammatolerans (strain DSM 15229 / JCM 11827 / EJ3)).